Consider the following 235-residue polypeptide: 2,3,4,5-tetrahydropyridine-2,6-dicarboxylate N-acetyltransferase (235 aa).

This sequence belongs to the transferase hexapeptide repeat family. DapH subfamily.

The catalysed reaction is (S)-2,3,4,5-tetrahydrodipicolinate + acetyl-CoA + H2O = L-2-acetamido-6-oxoheptanedioate + CoA. Its pathway is amino-acid biosynthesis; L-lysine biosynthesis via DAP pathway; LL-2,6-diaminopimelate from (S)-tetrahydrodipicolinate (acetylase route): step 1/3. Functionally, catalyzes the transfer of an acetyl group from acetyl-CoA to tetrahydrodipicolinate. This Anoxybacillus flavithermus (strain DSM 21510 / WK1) protein is 2,3,4,5-tetrahydropyridine-2,6-dicarboxylate N-acetyltransferase.